We begin with the raw amino-acid sequence, 592 residues long: Salivary peroxidase/catechol oxidase (592 aa).

Positions 1–21 (MWMFLKLLLFVCSSWWSCAQA) are cleaved as a signal peptide. C24 and C37 are joined by a disulfide. N25 is a glycosylation site (N-linked (GlcNAc...) asparagine). Catalysis depends on H110, which acts as the Proton acceptor. Ca(2+) contacts are provided by D111, T187, F189, D191, and S193. N230 carries an N-linked (GlcNAc...) asparagine glycan. A disulfide bond links C235 and C244. H353 provides a ligand contact to heme b. An N-linked (GlcNAc...) asparagine glycan is attached at N366. 2 disulfide bridges follow: C452-C509 and C553-C580.

The protein belongs to the peroxidase family. XPO subfamily. Female salivary gland.

It is found in the secreted. It catalyses the reaction 2 catechol + O2 = 2 1,2-benzoquinone + 2 H2O. Functionally, inhibits noradrenaline-induced smooth muscle contraction in the host, probably due to the oxidation of noradrenaline, resulting in vasodilation. Exhibits peroxidase activity. The sequence is that of Salivary peroxidase/catechol oxidase from Anopheles albimanus (New world malaria mosquito).